The sequence spans 447 residues: Tektin-4 (447 aa).

Coiled-coil stretches lie at residues Ala-69–Ala-144 and Phe-304–Leu-423. Over residues Asp-72 to Ser-81 the composition is skewed to basic and acidic residues. The disordered stretch occupies residues Asp-72 to Gly-104. The span at Gln-82–Gln-97 shows a compositional bias: low complexity.

This sequence belongs to the tektin family. In terms of assembly, microtubule inner protein component of sperm flagellar doublet microtubules. Post-translationally, ubiquitinated, leading to its degradation. Deubiquitinated by USP16, promoting its stability. As to expression, expressed in trachea multiciliated cells.

The protein localises to the cytoplasm. The protein resides in the cytoskeleton. It is found in the cilium axoneme. Its subcellular location is the flagellum axoneme. Functionally, microtubule inner protein (MIP) part of the dynein-decorated doublet microtubules (DMTs) in cilia and flagellar axoneme. Forms filamentous polymers in the walls of ciliary and flagellar microtubules. Contributes to normal sperm motility. The polypeptide is Tektin-4 (TEKT4) (Bos taurus (Bovine)).